The primary structure comprises 382 residues: UBP1-associated proteins 1B (382 aa).

Residues 1–99 (MAKEGEERKK…SDESEEIVDS (99 aa)) are disordered. Residues 10 to 22 (KEKKEKKERKERK) show a composition bias toward basic residues. Residues 23-34 (RREAEELAVREK) show a composition bias toward basic and acidic residues. An RRM domain is found at 163–248 (RNIFVRGLGW…RPFNSGKPRE (86 aa)).

Its subcellular location is the nucleus. In terms of biological role, acts as a component of a complex regulating the turnover of mRNAs in the nucleus. Binds with high affinity to RNA molecules that contain U-rich sequences in 3'-UTRs. May function in complex with UBP1 and contribute to the stabilization of mRNAs in the nucleus. This Arabidopsis thaliana (Mouse-ear cress) protein is UBP1-associated proteins 1B (UBA1B).